Consider the following 314-residue polypeptide: Acetaldehyde dehydrogenase 1 (314 aa).

11–14 (SGNI) contacts NAD(+). The Acyl-thioester intermediate role is filled by cysteine 129. NAD(+)-binding positions include 160-168 (SAGPGTRAN) and asparagine 292.

The protein belongs to the acetaldehyde dehydrogenase family.

It carries out the reaction acetaldehyde + NAD(+) + CoA = acetyl-CoA + NADH + H(+). The chain is Acetaldehyde dehydrogenase 1 from Nocardioides sp. (strain ATCC BAA-499 / JS614).